The chain runs to 436 residues: MRSLSSVALLSAIGAASAQAGPWGQCAGISHTGPTTCESGWSCVYLNDWYSQCQPGAATSSSTTVSSTKQPSSTVAAPSSTTSAHTLPTGSGSFAKTDGLKFNIDGKTKYFAGTNAYWLPFLTNNADVDAVFDHLQQTGLKILRTWGFNDVNTIPGSGTVYFQLHDKATGTSTINTGANGLQRLDYVISAAEKHGIKLIIPFVNNWDDYGGMNAYINAYGGSKTEWYTNEKIQSVYQAYIKAIVSRYRDSPAIFAWELGNEPRCKGCSTDVIYNWVAKTSAYIKSLDPNHMVTTGEEGMGLTVDSDGSYPYSKDEGSDFARNLAAPDIDFGVYHLYVADWGVSDNAWGNRWIKSHAKVCEAAGKPCLFEEYGIKDDHCGDSLKWQKTSLTTTANSADLFWQYGQQLSTGASPNDHYTIYYGTDDWKCAVIDHISQI.

A signal peptide spans 1 to 18 (MRSLSSVALLSAIGAASA). A CBM1 domain is found at 19 to 54 (QAGPWGQCAGISHTGPTTCESGWSCVYLNDWYSQCQ). The tract at residues 60–88 (SSSTTVSSTKQPSSTVAAPSSTTSAHTLP) is disordered. The segment at 79 to 113 (SSTTSAHTLPTGSGSFAKTDGLKFNIDGKTKYFAG) is ser-rich linker. Residues 114-436 (TNAYWLPFLT…CAVIDHISQI (323 aa)) form a catalytic region. Substrate is bound by residues Trp-146 and Asn-260. Residue Glu-261 is the Proton donor of the active site. Tyr-336 serves as a coordination point for substrate. Residue Glu-370 is the Nucleophile of the active site. Substrate is bound at residue Trp-400.

Belongs to the glycosyl hydrolase 5 (cellulase A) family.

The protein localises to the secreted. The enzyme catalyses Random hydrolysis of (1-&gt;4)-beta-D-mannosidic linkages in mannans, galactomannans and glucomannans.. Its function is as follows. Endo-1,4-mannanase, a crucial enzyme for depolymerization of seed galactomannans and wood galactoglucomannans. The sequence is that of Mannan endo-1,4-beta-mannosidase F (manF) from Aspergillus clavatus (strain ATCC 1007 / CBS 513.65 / DSM 816 / NCTC 3887 / NRRL 1 / QM 1276 / 107).